A 410-amino-acid chain; its full sequence is Lissencephaly-1 homolog B (410 aa).

The 33-residue stretch at 7 to 39 (QRDELNRAIADYLRSNGYEEAYSTFKKEAELDM) folds into the LisH domain. Residues 56-82 (TSVIRLQKKVMELESKLNEAKEEITLG) are a coiled coil. WD repeat units lie at residues 106–147 (GHRS…RTLK), 148–187 (GHTDSVQDISFDQTGKLLASCSADMTIKLWDFQGFECIRT), 190–229 (GHDHNVSSVAIMPNGDHIVSASRDKTIKMWEVATGYCVKT), 232–271 (GHREWVRMVRPNQDGSLIASCSNDQTVRVWVATSKECKAE), 274–333 (EHEH…CLMT), 336–375 (GHDNWVRGVLVHPGGRFIVSCADDKTLRIWDYKNKRCMKT), and 378–410 (AHEHFVTSLDMHQTAPYVVTGSVDQTVKVWECR).

Belongs to the WD repeat LIS1/nudF family. As to quaternary structure, can self-associate. Component of the cytosolic PAF-AH (I) heterotetrameric enzyme, which is composed of PAFAH1B1 (beta), PAFAH1B2 (alpha2) and PAFAH1B3 (alpha1) subunits. The catalytic activity of the enzyme resides in the alpha1 (PAFAH1B3) and alpha2 (PAFAH1B2) subunits, whereas the beta subunit (PAFAH1B1) has regulatory activity. Trimer formation is not essential for the catalytic activity. Interacts with dynein, dynactin, nde1 and ndel1.

It localises to the cytoplasm. The protein resides in the cytoskeleton. It is found in the microtubule organizing center. Its subcellular location is the centrosome. Functionally, regulatory subunit (beta subunit) of the cytosolic type I platelet-activating factor (PAF) acetylhydrolase (PAF-AH (I)), an enzyme that catalyzes the hydrolyze of the acetyl group at the sn-2 position of PAF and its analogs and participates in PAF inactivation. Regulates the PAF-AH (I) activity in a catalytic dimer composition-dependent manner. Positively regulates the activity of the minus-end directed microtubule motor protein dynein. May enhance dynein-mediated microtubule sliding by targeting dynein to the microtubule plus end. Required for several dynein- and microtubule-dependent processes such as the maintenance of Golgi integrity, the peripheral transport of microtubule fragments and the coupling of the nucleus and centrosome. May be required for proliferation of neuronal precursors and neuronal migration. This is Lissencephaly-1 homolog B (pafah1b1-2) from Salmo salar (Atlantic salmon).